The chain runs to 421 residues: Serine hydroxymethyltransferase (421 aa).

(6S)-5,6,7,8-tetrahydrofolate is bound by residues Leu120 and Gly124–Leu126. At Lys229 the chain carries N6-(pyridoxal phosphate)lysine. Residue Ser354–Phe356 coordinates (6S)-5,6,7,8-tetrahydrofolate.

Belongs to the SHMT family. Homodimer. It depends on pyridoxal 5'-phosphate as a cofactor.

The protein localises to the cytoplasm. The catalysed reaction is (6R)-5,10-methylene-5,6,7,8-tetrahydrofolate + glycine + H2O = (6S)-5,6,7,8-tetrahydrofolate + L-serine. Its pathway is one-carbon metabolism; tetrahydrofolate interconversion. It functions in the pathway amino-acid biosynthesis; glycine biosynthesis; glycine from L-serine: step 1/1. Its function is as follows. Catalyzes the reversible interconversion of serine and glycine with tetrahydrofolate (THF) serving as the one-carbon carrier. This reaction serves as the major source of one-carbon groups required for the biosynthesis of purines, thymidylate, methionine, and other important biomolecules. Also exhibits THF-independent aldolase activity toward beta-hydroxyamino acids, producing glycine and aldehydes, via a retro-aldol mechanism. This chain is Serine hydroxymethyltransferase, found in Opitutus terrae (strain DSM 11246 / JCM 15787 / PB90-1).